We begin with the raw amino-acid sequence, 92 residues long: Small ribosomal subunit protein uS19 (92 aa).

The protein belongs to the universal ribosomal protein uS19 family.

Its function is as follows. Protein S19 forms a complex with S13 that binds strongly to the 16S ribosomal RNA. The protein is Small ribosomal subunit protein uS19 of Polynucleobacter asymbioticus (strain DSM 18221 / CIP 109841 / QLW-P1DMWA-1) (Polynucleobacter necessarius subsp. asymbioticus).